The chain runs to 644 residues: Exoribonuclease 2 (644 aa).

One can recognise an RNB domain in the interval 189–516 (REDLTALDFV…NHRLLKAVIK (328 aa)). The S1 motif domain maps to 561 to 643 (DTRFAAEIVD…ETRSIIARPV (83 aa)).

Belongs to the RNR ribonuclease family. RNase II subfamily.

Its subcellular location is the cytoplasm. The catalysed reaction is Exonucleolytic cleavage in the 3'- to 5'-direction to yield nucleoside 5'-phosphates.. Functionally, involved in mRNA degradation. Hydrolyzes single-stranded polyribonucleotides processively in the 3' to 5' direction. This is Exoribonuclease 2 from Escherichia coli (strain SMS-3-5 / SECEC).